The primary structure comprises 607 residues: Type 3 secretion system secretin (607 aa).

An N-terminal signal peptide occupies residues 1–33 (MAPACTTAHRRRAPLAAVLMLSLLPLLSPHADA). The disordered stretch occupies residues 277-332 (ASSSDRVPVSPPLPGSGAAAAAGSPASVWPELSKGRRDESNPIDAGGGAELASDAP). The segment covering 291–306 (GSGAAAAAGSPASVWP) has biased composition (low complexity).

This sequence belongs to the bacterial secretin family. T3SS SctC subfamily. As to quaternary structure, the core secretion machinery of the T3SS is composed of approximately 20 different proteins, including cytoplasmic components, a base, an export apparatus and a needle. This subunit is part of the base, which anchors the injectisome in the bacterial cell envelope. Forms a stable homooligomeric complex.

It is found in the cell outer membrane. Its function is as follows. Component of the type III secretion system (T3SS), also called injectisome, which is used to inject bacterial effector proteins into eukaryotic host cells. Forms a ring-shaped multimeric structure with an apparent central pore in the outer membrane. Necessary for both basic pathogenicity and the induction of the hypersensitive response in resistant plants. In Xanthomonas euvesicatoria, this protein is Type 3 secretion system secretin.